Reading from the N-terminus, the 211-residue chain is Large ribosomal subunit protein uL3 (211 aa).

The residue at position 150 (Gln150) is an N5-methylglutamine.

It belongs to the universal ribosomal protein uL3 family. As to quaternary structure, part of the 50S ribosomal subunit. Forms a cluster with proteins L14 and L19. Post-translationally, methylated by PrmB.

One of the primary rRNA binding proteins, it binds directly near the 3'-end of the 23S rRNA, where it nucleates assembly of the 50S subunit. This Pseudomonas syringae pv. syringae (strain B728a) protein is Large ribosomal subunit protein uL3.